Here is a 374-residue protein sequence, read N- to C-terminus: Biotin synthase (374 aa).

The Radical SAM core domain occupies 49 to 276 (NEVQVSTLLS…KSHVRLSAGR (228 aa)). Cysteine 64, cysteine 68, and cysteine 71 together coordinate [4Fe-4S] cluster. Cysteine 108, cysteine 139, cysteine 199, and arginine 271 together coordinate [2Fe-2S] cluster. The tract at residues 344 to 374 (QQQEQAEGSNDLFIDATKPKVAAKQQHATEA) is disordered.

The protein belongs to the radical SAM superfamily. Biotin synthase family. Homodimer. [4Fe-4S] cluster is required as a cofactor. Requires [2Fe-2S] cluster as cofactor.

The catalysed reaction is (4R,5S)-dethiobiotin + (sulfur carrier)-SH + 2 reduced [2Fe-2S]-[ferredoxin] + 2 S-adenosyl-L-methionine = (sulfur carrier)-H + biotin + 2 5'-deoxyadenosine + 2 L-methionine + 2 oxidized [2Fe-2S]-[ferredoxin]. It functions in the pathway cofactor biosynthesis; biotin biosynthesis; biotin from 7,8-diaminononanoate: step 2/2. In terms of biological role, catalyzes the conversion of dethiobiotin (DTB) to biotin by the insertion of a sulfur atom into dethiobiotin via a radical-based mechanism. In Alteromonas mediterranea (strain DSM 17117 / CIP 110805 / LMG 28347 / Deep ecotype), this protein is Biotin synthase.